Consider the following 109-residue polypeptide: Large ribosomal subunit protein uL24 (109 aa).

Belongs to the universal ribosomal protein uL24 family. As to quaternary structure, part of the 50S ribosomal subunit.

Its function is as follows. One of two assembly initiator proteins, it binds directly to the 5'-end of the 23S rRNA, where it nucleates assembly of the 50S subunit. Functionally, one of the proteins that surrounds the polypeptide exit tunnel on the outside of the subunit. The sequence is that of Large ribosomal subunit protein uL24 from Ehrlichia ruminantium (strain Gardel).